A 325-amino-acid chain; its full sequence is Phospho-N-acetylmuramoyl-pentapeptide-transferase (325 aa).

A run of 9 helical transmembrane segments spans residues 7–27 (LFVL…FIPF), 57–77 (IVIV…ITGF), 81–101 (LLLL…DDYL), 122–142 (VIAA…FIAI), 146–166 (TFGF…LLGA), 186–206 (IAFG…TALF), 227–247 (VFMG…IAIL), 252–272 (LMLI…IIQV), and 302–322 (VVVT…YIGV).

It belongs to the glycosyltransferase 4 family. MraY subfamily. It depends on Mg(2+) as a cofactor.

The protein resides in the cell membrane. It catalyses the reaction UDP-N-acetyl-alpha-D-muramoyl-L-alanyl-gamma-D-glutamyl-meso-2,6-diaminopimeloyl-D-alanyl-D-alanine + di-trans,octa-cis-undecaprenyl phosphate = di-trans,octa-cis-undecaprenyl diphospho-N-acetyl-alpha-D-muramoyl-L-alanyl-D-glutamyl-meso-2,6-diaminopimeloyl-D-alanyl-D-alanine + UMP. The protein operates within cell wall biogenesis; peptidoglycan biosynthesis. Catalyzes the initial step of the lipid cycle reactions in the biosynthesis of the cell wall peptidoglycan: transfers peptidoglycan precursor phospho-MurNAc-pentapeptide from UDP-MurNAc-pentapeptide onto the lipid carrier undecaprenyl phosphate, yielding undecaprenyl-pyrophosphoryl-MurNAc-pentapeptide, known as lipid I. This chain is Phospho-N-acetylmuramoyl-pentapeptide-transferase, found in Shouchella clausii (strain KSM-K16) (Alkalihalobacillus clausii).